Consider the following 256-residue polypeptide: Calsenilin (256 aa).

The interval 1–22 is disordered; the sequence is MQRTKEAVKASDGNLLGDPGRI. K26 participates in a covalent cross-link: Glycyl lysine isopeptide (Lys-Gly) (interchain with G-Cter in SUMO1). Residues C45 and C46 are each lipidated (S-palmitoyl cysteine). S60 and S63 each carry phosphoserine. The region spanning 67 to 123 is the EF-hand 1; degenerate domain; that stretch reads LELSTVRHQPEGLDQLQAQTKFTKKELQSLYRGFKNECPTGLVDEDTFKLIYSQFFP. K90 is covalently cross-linked (Glycyl lysine isopeptide (Lys-Gly) (interchain with G-Cter in SUMO1)). EF-hand domains follow at residues 126–161, 162–197, and 210–245; these read DATT…LLRG, TVHE…IYDM, and APLE…DENI. Positions 175, 177, 179, 181, 186, 223, 225, 227, and 234 each coordinate Ca(2+). The tract at residues 243–256 is interaction with KCND2; sequence ENIMNSMQLFENVI.

This sequence belongs to the recoverin family. Binds to DNA as a homomultimer. Dimerization is induced by binding to calcium. Interacts with the C-terminus of PSEN1 and PSEN2 and with PSEN2 CTF subunit. Associates with KCN1. Component of heteromultimeric potassium channels. Identified in potassium channel complexes containing KCND1, KCND2, KCND3, KCNIP1, KCNIP2, KCNIP3, KCNIP4, DPP6 and DPP10. Interacts with KCND2 and KCND3. In terms of processing, palmitoylated. Palmitoylation enhances association with the plasma membrane. Post-translationally, proteolytically cleaved by caspase-3. Highly expressed in brain. Isoform 1 or isoform 4 (T+ forms) are expressed at equal levels with isoform 2 or isoform 3 (T- forms). Primarily detected in the layer V and deep layer VI of the cerebral cortex, the hippocampus, and the entire cerebellum. Expressed at low levels in testis. Also expressed in heart.

It is found in the cytoplasm. Its subcellular location is the cell membrane. The protein localises to the endoplasmic reticulum. The protein resides in the golgi apparatus. It localises to the nucleus. In terms of biological role, calcium-dependent transcriptional repressor that binds to the DRE element of genes including PDYN and FOS. Affinity for DNA is reduced upon binding to calcium and enhanced by binding to magnesium. Seems to be involved in nociception. Its function is as follows. Regulatory subunit of Kv4/D (Shal)-type voltage-gated rapidly inactivating A-type potassium channels, such as KCND2/Kv4.2 and KCND3/Kv4.3. Modulates channel expression at the cell membrane, gating characteristics, inactivation kinetics and rate of recovery from inactivation in a calcium-dependent and isoform-specific manner. May play a role in the regulation of PSEN2 proteolytic processing and apoptosis. Together with PSEN2 involved in modulation of amyloid-beta formation. The polypeptide is Calsenilin (Kcnip3) (Mus musculus (Mouse)).